An 874-amino-acid polypeptide reads, in one-letter code: Alanine--tRNA ligase (874 aa).

Zn(2+)-binding residues include His-561, His-565, Cys-663, and His-667.

It belongs to the class-II aminoacyl-tRNA synthetase family. Zn(2+) serves as cofactor.

It is found in the cytoplasm. The catalysed reaction is tRNA(Ala) + L-alanine + ATP = L-alanyl-tRNA(Ala) + AMP + diphosphate. Functionally, catalyzes the attachment of alanine to tRNA(Ala) in a two-step reaction: alanine is first activated by ATP to form Ala-AMP and then transferred to the acceptor end of tRNA(Ala). Also edits incorrectly charged Ser-tRNA(Ala) and Gly-tRNA(Ala) via its editing domain. The protein is Alanine--tRNA ligase of Trichodesmium erythraeum (strain IMS101).